A 138-amino-acid polypeptide reads, in one-letter code: Envelope glycoprotein N (138 aa).

Residues 1 to 21 (MEWNTLVLGLLVLSVVAESSG) form the signal peptide. Residues 22 to 101 (NNSSTSTSAT…SHMYELSLSS (80 aa)) lie on the Virion surface side of the membrane. The helical transmembrane segment at 102–122 (FAAWWTMLNALILMGAFCIVL) threads the bilayer. The Intravirion segment spans residues 123–138 (RHCCFQNFTATTTKGY).

It belongs to the herpesviridae glycoprotein N family. Interacts (via N-terminus) with gM (via N-terminus). The gM-gN heterodimer forms the gCII complex. O-glycosylated.

It localises to the virion membrane. It is found in the host membrane. The protein localises to the host Golgi apparatus. Its subcellular location is the host trans-Golgi network. Functionally, envelope glycoprotein necessary for proper maturation of gM and modulation of its membrane fusion activity. Also plays a critical role in virion morphogenesis. This is Envelope glycoprotein N from Human cytomegalovirus (strain AD169) (HHV-5).